A 70-amino-acid chain; its full sequence is Neuropeptide SIFamide (70 aa).

Residues M1–G22 form the signal peptide. Residue F34 is modified to Phenylalanine amide. Positions G38–K70 are excised as a propeptide.

Expressed in antennal lobe (AL) and gnathal ganglion (GNG) with expression detected in most animals (at protein level). Not expressed in corpora cardiaca (CC) and corpora allata (CA) (at protein level).

The protein localises to the secreted. Its function is as follows. Ligand for the neuropeptide SIFamide receptor. In Agrotis ipsilon (Black cutworm moth), this protein is Neuropeptide SIFamide.